Consider the following 282-residue polypeptide: tRNA uridine(34) hydroxylase (282 aa).

The region spanning 128–222 (EGRPVVMLDT…YFEEVGGSHY (95 aa)) is the Rhodanese domain. The Cysteine persulfide intermediate role is filled by C182.

It belongs to the TrhO family.

The enzyme catalyses uridine(34) in tRNA + AH2 + O2 = 5-hydroxyuridine(34) in tRNA + A + H2O. Its function is as follows. Catalyzes oxygen-dependent 5-hydroxyuridine (ho5U) modification at position 34 in tRNAs. This Cupriavidus necator (strain ATCC 17699 / DSM 428 / KCTC 22496 / NCIMB 10442 / H16 / Stanier 337) (Ralstonia eutropha) protein is tRNA uridine(34) hydroxylase.